The chain runs to 153 residues: Transcriptional repressor NrdR (153 aa).

A zinc finger lies at 3–34 (CPYCNADDTKVIDSRLAAEGAQVRRRRQCNQC). An ATP-cone domain is found at 49–139 (PRIIKSNGRI…VYRDFQDIEA (91 aa)).

It belongs to the NrdR family. Zn(2+) serves as cofactor.

In terms of biological role, negatively regulates transcription of bacterial ribonucleotide reductase nrd genes and operons by binding to NrdR-boxes. This Psychrobacter sp. (strain PRwf-1) protein is Transcriptional repressor NrdR.